Here is a 288-residue protein sequence, read N- to C-terminus: 6-phospho-5-dehydro-2-deoxy-D-gluconate aldolase (288 aa).

Residue Asp85 is the Proton donor of the active site. 2 residues coordinate Zn(2+): His86 and His180. Residue Gly181 participates in dihydroxyacetone phosphate binding. His208 serves as a coordination point for Zn(2+). Dihydroxyacetone phosphate-binding positions include Gly209–Ser211 and Asn230–Thr233. Position 233 is a phosphothreonine (Thr233).

Belongs to the class II fructose-bisphosphate aldolase family. IolJ subfamily. The cofactor is Zn(2+).

It carries out the reaction 6-phospho-5-dehydro-2-deoxy-D-gluconate = 3-oxopropanoate + dihydroxyacetone phosphate. The protein operates within polyol metabolism; myo-inositol degradation into acetyl-CoA; acetyl-CoA from myo-inositol: step 6/7. Functionally, produces dihydroxyacetone phosphate (DHAP or glycerone phosphate) and malonic semialdehyde (MSA or 3-oxopropanoate) from 6-phospho-5-dehydro-2-deoxy-D-gluconate (DKGP). The polypeptide is 6-phospho-5-dehydro-2-deoxy-D-gluconate aldolase (iolJ) (Halalkalibacterium halodurans (strain ATCC BAA-125 / DSM 18197 / FERM 7344 / JCM 9153 / C-125) (Bacillus halodurans)).